The primary structure comprises 105 residues: UPF0251 protein AF_0666 (105 aa).

The protein belongs to the UPF0251 family.

This chain is UPF0251 protein AF_0666, found in Archaeoglobus fulgidus (strain ATCC 49558 / DSM 4304 / JCM 9628 / NBRC 100126 / VC-16).